The sequence spans 103 residues: RNA-binding protein Hfq (103 aa).

Residues 9-68 (DPFLNALRRERVPVSIYLVNGIKLQGQIESFDQFVILLKNTVSQMVYKHAISTVVPSRPV) enclose the Sm domain. The segment at 63–103 (VPSRPVSHHSNNAGGGTGSNFHHGSNAQGSSAPAQDSDETE) is disordered. A compositionally biased stretch (polar residues) spans 81 to 96 (SNFHHGSNAQGSSAPA).

It belongs to the Hfq family. As to quaternary structure, homohexamer.

In terms of biological role, RNA chaperone that binds small regulatory RNA (sRNAs) and mRNAs to facilitate mRNA translational regulation in response to envelope stress, environmental stress and changes in metabolite concentrations. Also binds with high specificity to tRNAs. The polypeptide is RNA-binding protein Hfq (Enterobacter sp. (strain 638)).